Here is a 451-residue protein sequence, read N- to C-terminus: MSHLPQEPEFEQAYGELASALENSSLFNEHPEYRTALAVAAIPERVIQFRVVWNDDKGNLQVNRGYRVQFNGALGPYKGGLRFHPSVNLSILKFLGFEQIFKNALTGLNMGGGKGGADFDPKGKSDAEIRRFCQAFMTELSKHIGAETDVPAGDIGVGGREIGYLFGAYRKFANRWEGVLTGKGLSWGGSLIRPEATGYGLVYYVEYMLKHANRGTFEGKRVALSGSGNVAQYAALKIIELGGSVVSLSDSKGALVAKEGSSFTPEQIHNIAALKIKHQALTTFEHDGQFTWIEGARPWVHVGKVDIALPSATQNEVSKEEAQALVDAGAFIVAEGSNMGCTAEAIDVFEAHRKEKGAEALWYAPGKASNCGGVAVSGLEMAQNSQRIQWTEKEVDDRLKAIMKDAFVAGLETAQKYVEAKEGELPSLIAGSNIAGFIKVAEAMHDQGDWF.

The active site involves Lys-114.

This sequence belongs to the Glu/Leu/Phe/Val dehydrogenases family. In terms of assembly, homohexamer.

It catalyses the reaction L-glutamate + NADP(+) + H2O = 2-oxoglutarate + NH4(+) + NADPH + H(+). This Fusarium fujikuroi (Bakanae and foot rot disease fungus) protein is NADP-specific glutamate dehydrogenase (GDH2).